Consider the following 132-residue polypeptide: Large ribosomal subunit protein bL12 (132 aa).

Belongs to the bacterial ribosomal protein bL12 family. In terms of assembly, homodimer. Part of the ribosomal stalk of the 50S ribosomal subunit. Forms a multimeric L10(L12)X complex, where L10 forms an elongated spine to which 2 to 4 L12 dimers bind in a sequential fashion. Binds GTP-bound translation factors.

Functionally, forms part of the ribosomal stalk which helps the ribosome interact with GTP-bound translation factors. Is thus essential for accurate translation. This Chloroflexus aggregans (strain MD-66 / DSM 9485) protein is Large ribosomal subunit protein bL12.